The following is a 395-amino-acid chain: MEKKNLLNVIKKVSFSLFIVIIYVMGLYIPLPFAEGTKQYMEAVKNTPISILGAFSGANFTRISIFSIGLNPLMFSMLIIQLLSFTHSFGFDALSPKQVQYLMQFLTMIITIIQAALLVFAFTNRRNGLEDFEMILILSAGSCLVVWLCYRNMKYGVGASAPVILTSILNGAIPNIISNVKLLLTMKYAWIWLAALAIFILLLIKFWLAFTKAYYPLKVVNPSLPASSNLMTVPLGLNMAAMMMYMVGMAILTLPLMVGRYFSSSSLINNWVFQASFSAVMGILIFYFFTFVNFDPKEQAKSFRNNHYYIPNIAPGRPTQRYLNRLIWIIAFPGAVLNAFQLVFGLYGGNFLGNYAGFAIIPMNVVMITMFMGGIKDQIDTILFPYRYDRLLKDN.

The next 10 helical transmembrane spans lie at 13-33 (VSFS…PLPF), 63-83 (ISIF…IQLL), 102-122 (LMQF…VFAF), 128-148 (GLED…VVWL), 157-177 (VGAS…PNII), 190-210 (WIWL…WLAF), 239-259 (MAAM…LMVG), 272-292 (VFQA…FTFV), 326-346 (LIWI…VFGL), and 355-375 (YAGF…MGGI).

It belongs to the SecY/SEC61-alpha family. SecY2 subfamily. Component of the accessory SecA2/SecY2 protein translocase complex required to export cell wall proteins. May form heterotrimers with SecE and SecG subunits.

The protein localises to the cell membrane. Its function is as follows. Part of the accessory SecA2/SecY2 system specifically required for export of possible cell wall proteins. The central subunit of a protein translocation channel. This Lactobacillus johnsonii (strain CNCM I-12250 / La1 / NCC 533) protein is Accessory Sec system protein translocase subunit SecY2.